A 241-amino-acid chain; its full sequence is uncharacterized protein (241 aa).

This is an uncharacterized protein from Methanocaldococcus jannaschii (strain ATCC 43067 / DSM 2661 / JAL-1 / JCM 10045 / NBRC 100440) (Methanococcus jannaschii).